A 50-amino-acid polypeptide reads, in one-letter code: Conotoxin Cal6.19 (50 aa).

An N-terminal signal peptide occupies residues 1-22; it reads MKVTCVLVLTLMALTVCQVATA. Intrachain disulfides connect Cys-24–Cys-37, Cys-30–Cys-41, and Cys-36–Cys-46.

Expressed by the venom duct.

Its subcellular location is the secreted. Probable neurotoxin. The sequence is that of Conotoxin Cal6.19 from Californiconus californicus (California cone).